Here is a 350-residue protein sequence, read N- to C-terminus: Uroporphyrinogen decarboxylase (350 aa).

Residues 28–32, Asp78, Tyr154, Thr209, and His325 each bind substrate; that span reads RQAGR.

This sequence belongs to the uroporphyrinogen decarboxylase family. Homodimer.

The protein resides in the cytoplasm. It catalyses the reaction uroporphyrinogen III + 4 H(+) = coproporphyrinogen III + 4 CO2. It functions in the pathway porphyrin-containing compound metabolism; protoporphyrin-IX biosynthesis; coproporphyrinogen-III from 5-aminolevulinate: step 4/4. Its function is as follows. Catalyzes the decarboxylation of four acetate groups of uroporphyrinogen-III to yield coproporphyrinogen-III. The chain is Uroporphyrinogen decarboxylase from Nitrobacter hamburgensis (strain DSM 10229 / NCIMB 13809 / X14).